The sequence spans 206 residues: MSANELTSGDFTESGEPFKLFAEWLKEAEVSEPNDPNAVALATVDEDGLPNVRMVLLKGFDDDGFVFYTNFESQKGREILGQKKAAMCFHWKSLRRQVRLRGPVEIVTDAEADAYFKTRARGSRIGAWASRQSRPLESRFALEKAVAEYTARYAIGEIPRPAHWSGFRIRPTSIEFWKDQKFRLHDRVEFRRPSPEGEWDKVRMYP.

FMN is bound by residues 53–58 (RMVLLK), 68–69 (YT), lysine 75, and glutamine 97. Substrate is bound at residue lysine 58. Substrate is bound by residues tyrosine 115, arginine 119, and serine 123. FMN contacts are provided by residues 132 to 133 (QS) and tryptophan 177. 183–185 (RLH) lines the substrate pocket. Arginine 187 lines the FMN pocket.

It belongs to the pyridoxamine 5'-phosphate oxidase family. In terms of assembly, homodimer. FMN serves as cofactor.

It carries out the reaction pyridoxamine 5'-phosphate + O2 + H2O = pyridoxal 5'-phosphate + H2O2 + NH4(+). The catalysed reaction is pyridoxine 5'-phosphate + O2 = pyridoxal 5'-phosphate + H2O2. It functions in the pathway cofactor metabolism; pyridoxal 5'-phosphate salvage; pyridoxal 5'-phosphate from pyridoxamine 5'-phosphate: step 1/1. Its pathway is cofactor metabolism; pyridoxal 5'-phosphate salvage; pyridoxal 5'-phosphate from pyridoxine 5'-phosphate: step 1/1. Functionally, catalyzes the oxidation of either pyridoxine 5'-phosphate (PNP) or pyridoxamine 5'-phosphate (PMP) into pyridoxal 5'-phosphate (PLP). The sequence is that of Pyridoxine/pyridoxamine 5'-phosphate oxidase from Rhizobium johnstonii (strain DSM 114642 / LMG 32736 / 3841) (Rhizobium leguminosarum bv. viciae).